A 197-amino-acid polypeptide reads, in one-letter code: Short chain dehydrogenase ausX (197 aa).

Residues isoleucine 49, aspartate 95, arginine 157, and tyrosine 189 each coordinate NADP(+). Catalysis depends on tyrosine 189, which acts as the Proton acceptor. Tyrosine 189 acts as the Proton donor in catalysis.

This sequence belongs to the short-chain dehydrogenases/reductases (SDR) family.

Its pathway is secondary metabolite biosynthesis; terpenoid biosynthesis. Its function is as follows. Short chain dehydrogenase; part of the gene cluster A that mediates the biosynthesis of austinol and dehydroaustinol, two fungal meroterpenoids. The first step of the pathway is the synthesis of 3,5-dimethylorsellinic acid by the polyketide synthase ausA. 3,5-dimethylorsellinic acid is then prenylated by the polyprenyl transferase ausN. Further epoxidation by the FAD-dependent monooxygenase ausM and cyclization by the probable terpene cyclase ausL lead to the formation of protoaustinoid A. Protoaustinoid A is then oxidized to spiro-lactone preaustinoid A3 by the combined action of the FAD-binding monooxygenases ausB and ausC, and the dioxygenase ausE. Acid-catalyzed keto-rearrangement and ring contraction of the tetraketide portion of preaustinoid A3 by ausJ lead to the formation of preaustinoid A4. The aldo-keto reductase ausK, with the help of ausH, is involved in the next step by transforming preaustinoid A4 into isoaustinone which is in turn hydroxylated by the P450 monooxygenase ausI to form austinolide. Finally, the cytochrome P450 monooxygenase ausG modifies austinolide to austinol. Austinol can be further modified to dehydroaustinol which forms a diffusible complex with diorcinol that initiates conidiation. Due to genetic rearrangements of the clusters and the subsequent loss of some enzymes, the end products of the Emericella nidulans austinoid biosynthesis clusters are austinol and dehydroaustinol, even if additional enzymes, such as the O-acetyltransferase ausQ and the cytochrome P450 monooxygenase ausR are still functional. In Emericella nidulans (strain FGSC A4 / ATCC 38163 / CBS 112.46 / NRRL 194 / M139) (Aspergillus nidulans), this protein is Short chain dehydrogenase ausX.